The following is a 1072-amino-acid chain: DNA-directed RNA polymerase subunit beta (1072 aa).

The protein belongs to the RNA polymerase beta chain family. In terms of assembly, in plastids the minimal PEP RNA polymerase catalytic core is composed of four subunits: alpha, beta, beta', and beta''. When a (nuclear-encoded) sigma factor is associated with the core the holoenzyme is formed, which can initiate transcription.

The protein localises to the plastid. It localises to the chloroplast. The enzyme catalyses RNA(n) + a ribonucleoside 5'-triphosphate = RNA(n+1) + diphosphate. Its function is as follows. DNA-dependent RNA polymerase catalyzes the transcription of DNA into RNA using the four ribonucleoside triphosphates as substrates. This Oenothera elata subsp. hookeri (Hooker's evening primrose) protein is DNA-directed RNA polymerase subunit beta.